A 467-amino-acid polypeptide reads, in one-letter code: ATP synthase subunit beta (467 aa).

ATP is bound at residue 153–160; the sequence is GGAGVGKT.

Belongs to the ATPase alpha/beta chains family. As to quaternary structure, F-type ATPases have 2 components, CF(1) - the catalytic core - and CF(0) - the membrane proton channel. CF(1) has five subunits: alpha(3), beta(3), gamma(1), delta(1), epsilon(1). CF(0) has three main subunits: a(1), b(2) and c(9-12). The alpha and beta chains form an alternating ring which encloses part of the gamma chain. CF(1) is attached to CF(0) by a central stalk formed by the gamma and epsilon chains, while a peripheral stalk is formed by the delta and b chains.

The protein localises to the cell membrane. The catalysed reaction is ATP + H2O + 4 H(+)(in) = ADP + phosphate + 5 H(+)(out). Produces ATP from ADP in the presence of a proton gradient across the membrane. The catalytic sites are hosted primarily by the beta subunits. In Lactiplantibacillus plantarum (strain ATCC BAA-793 / NCIMB 8826 / WCFS1) (Lactobacillus plantarum), this protein is ATP synthase subunit beta.